A 268-amino-acid chain; its full sequence is Calpain small subunit 1 (268 aa).

An N-acetylmethionine modification is found at Met1. A Phosphoserine modification is found at Ser6. The EF-hand 1; atypical domain occupies 96-130; sequence EEVRQFRKLFVQLAGDDMEVSATELMNILNKVVTR. Ca(2+)-binding residues include Ala109, Asp112, Glu114, Glu119, Asp137, Asp152, Asp154, Thr156, Lys158, and Glu163. EF-hand domains are found at residues 139–172, 169–204, 205–233, and 234–268; these read FGID…NNIK, NNIK…AGFH, LNEH…ISCL, and VRLD…TMYS. Lys179 is subject to N6-acetyllysine. 6 residues coordinate Ca(2+): Asp182, Asp184, Ser186, Thr188, Glu193, and Asp225.

Homodimer or heterodimer of a large (catalytic) and a small (regulatory) subunit. In presence of calcium, the heterodimer dissociates.

Its subcellular location is the cytoplasm. It is found in the cell membrane. Functionally, regulatory subunit of the calcium-regulated non-lysosomal thiol-protease which catalyzes limited proteolysis of substrates involved in cytoskeletal remodeling and signal transduction. Essential for embryonic development. The sequence is that of Calpain small subunit 1 (Capns1) from Mus musculus (Mouse).